Reading from the N-terminus, the 374-residue chain is Chaperone protein DnaJ (374 aa).

Residues 5-70 enclose the J domain; it reads DYYEVLGVSK…QKRAAYDQYG (66 aa). The CR-type zinc-finger motif lies at 132 to 210; sequence GTTVKIRVPT…CHGHGRVEET (79 aa). Cys145, Cys148, Cys162, Cys165, Cys184, Cys187, Cys198, and Cys201 together coordinate Zn(2+). CXXCXGXG motif repeat units follow at residues 145-152, 162-169, 184-191, and 198-205; these read CKPCGGSG, CTTCGGHG, CPNCRGQG, and CKECHGHG.

This sequence belongs to the DnaJ family. Homodimer. Zn(2+) serves as cofactor.

It localises to the cytoplasm. Functionally, participates actively in the response to hyperosmotic and heat shock by preventing the aggregation of stress-denatured proteins and by disaggregating proteins, also in an autonomous, DnaK-independent fashion. Unfolded proteins bind initially to DnaJ; upon interaction with the DnaJ-bound protein, DnaK hydrolyzes its bound ATP, resulting in the formation of a stable complex. GrpE releases ADP from DnaK; ATP binding to DnaK triggers the release of the substrate protein, thus completing the reaction cycle. Several rounds of ATP-dependent interactions between DnaJ, DnaK and GrpE are required for fully efficient folding. Also involved, together with DnaK and GrpE, in the DNA replication of plasmids through activation of initiation proteins. In Saccharophagus degradans (strain 2-40 / ATCC 43961 / DSM 17024), this protein is Chaperone protein DnaJ.